Here is a 241-residue protein sequence, read N- to C-terminus: Ribonuclease P protein component 3 (241 aa).

It belongs to the eukaryotic/archaeal RNase P protein component 3 family. In terms of assembly, consists of a catalytic RNA component and at least 4-5 protein subunits.

Its subcellular location is the cytoplasm. It carries out the reaction Endonucleolytic cleavage of RNA, removing 5'-extranucleotides from tRNA precursor.. Part of ribonuclease P, a protein complex that generates mature tRNA molecules by cleaving their 5'-ends. The polypeptide is Ribonuclease P protein component 3 (Methanococcoides burtonii (strain DSM 6242 / NBRC 107633 / OCM 468 / ACE-M)).